The primary structure comprises 279 residues: Methyltransferase ausD (279 aa).

S-adenosyl-L-methionine-binding positions include 124–125 (DL), 152–153 (DI), and R244.

This sequence belongs to the class I-like SAM-binding methyltransferase superfamily. As to quaternary structure, homodimer.

The protein operates within secondary metabolite biosynthesis; terpenoid biosynthesis. In terms of biological role, methyltransferase; part of the gene cluster that mediates the biosynthesis of calidodehydroaustin, a fungal meroterpenoid. The first step of the pathway is the synthesis of 3,5-dimethylorsellinic acid by the polyketide synthase ausA. 3,5-dimethylorsellinic acid is then prenylated by the polyprenyl transferase ausN. Further epoxidation by the FAD-dependent monooxygenase ausM and cyclization by the probable terpene cyclase ausL lead to the formation of protoaustinoid A. Protoaustinoid A is then oxidized to spiro-lactone preaustinoid A3 by the combined action of the FAD-binding monooxygenases ausB and ausC, and the dioxygenase ausE. Acid-catalyzed keto-rearrangement and ring contraction of the tetraketide portion of preaustinoid A3 by ausJ lead to the formation of preaustinoid A4. The aldo-keto reductase ausK, with the help of ausH, is involved in the next step by transforming preaustinoid A4 into isoaustinone which is in turn hydroxylated by the P450 monooxygenase ausI to form austinolide. The cytochrome P450 monooxygenase ausG modifies austinolide to austinol. Austinol is further acetylated to austin by the O-acetyltransferase ausP, which spontaneously changes to dehydroaustin. The cytochrome P450 monooxygenase ausR then converts dehydroaustin is into 7-dehydrodehydroaustin. The hydroxylation catalyzed by ausR permits the O-acetyltransferase ausQ to add an additional acetyl group to the molecule, leading to the formation of acetoxydehydroaustin. The short chain dehydrogenase ausT catalyzes the reduction of the double bond present between carbon atoms 1 and 2 to convert 7-dehydrodehydroaustin into 1,2-dihydro-7-hydroxydehydroaustin. AusQ catalyzes not only an acetylation reaction but also the addition of the PKS ausV diketide product to 1,2-dihydro-7-hydroxydehydroaustin, forming precalidodehydroaustin. Finally, the iron/alpha-ketoglutarate-dependent dioxygenase converts precalidodehydroaustin into calidodehydroaustin. The chain is Methyltransferase ausD from Aspergillus calidoustus.